Reading from the N-terminus, the 295-residue chain is Pyridoxal 5'-phosphate synthase subunit PdxS (295 aa).

Asp25 is a binding site for D-ribose 5-phosphate. Lys82 (schiff-base intermediate with D-ribose 5-phosphate) is an active-site residue. Gly154 lines the D-ribose 5-phosphate pocket. Arg166 serves as a coordination point for D-glyceraldehyde 3-phosphate. Residues Gly215 and 236-237 (GS) each bind D-ribose 5-phosphate.

Belongs to the PdxS/SNZ family. As to quaternary structure, in the presence of PdxT, forms a dodecamer of heterodimers.

It catalyses the reaction aldehydo-D-ribose 5-phosphate + D-glyceraldehyde 3-phosphate + L-glutamine = pyridoxal 5'-phosphate + L-glutamate + phosphate + 3 H2O + H(+). Its pathway is cofactor biosynthesis; pyridoxal 5'-phosphate biosynthesis. Catalyzes the formation of pyridoxal 5'-phosphate from ribose 5-phosphate (RBP), glyceraldehyde 3-phosphate (G3P) and ammonia. The ammonia is provided by the PdxT subunit. Can also use ribulose 5-phosphate and dihydroxyacetone phosphate as substrates, resulting from enzyme-catalyzed isomerization of RBP and G3P, respectively. The sequence is that of Pyridoxal 5'-phosphate synthase subunit PdxS from Staphylococcus aureus (strain Mu3 / ATCC 700698).